Consider the following 476-residue polypeptide: Cytochrome P450 6B5 (476 aa).

Residue C443 coordinates heme.

Belongs to the cytochrome P450 family. Heme serves as cofactor.

The protein resides in the endoplasmic reticulum membrane. Its subcellular location is the microsome membrane. The enzyme catalyses an organic molecule + reduced [NADPH--hemoprotein reductase] + O2 = an alcohol + oxidized [NADPH--hemoprotein reductase] + H2O + H(+). In terms of biological role, enables the insect to feed on furanocoumarin-producing plants and evolved as an adaptation for detoxification of xanthotoxin and other furanocoumarins. This is Cytochrome P450 6B5 (CYP6B5) from Papilio glaucus (Eastern tiger swallowtail butterfly).